The primary structure comprises 201 residues: dTTP/UTP pyrophosphatase (201 aa).

Asp76 serves as the catalytic Proton acceptor.

This sequence belongs to the Maf family. YhdE subfamily. The cofactor is a divalent metal cation.

The protein resides in the cytoplasm. The enzyme catalyses dTTP + H2O = dTMP + diphosphate + H(+). It carries out the reaction UTP + H2O = UMP + diphosphate + H(+). Functionally, nucleoside triphosphate pyrophosphatase that hydrolyzes dTTP and UTP. May have a dual role in cell division arrest and in preventing the incorporation of modified nucleotides into cellular nucleic acids. The protein is dTTP/UTP pyrophosphatase of Neisseria meningitidis serogroup A / serotype 4A (strain DSM 15465 / Z2491).